The following is a 191-amino-acid chain: Thymidine kinase (191 aa).

Residues 9–16 (GSMNSGKT) and 85–88 (DESQ) each bind ATP. Glu86 functions as the Proton acceptor in the catalytic mechanism. Positions 143, 146, 181, and 184 each coordinate Zn(2+).

This sequence belongs to the thymidine kinase family. As to quaternary structure, homotetramer.

The protein resides in the cytoplasm. The catalysed reaction is thymidine + ATP = dTMP + ADP + H(+). This chain is Thymidine kinase, found in Listeria innocua serovar 6a (strain ATCC BAA-680 / CLIP 11262).